The sequence spans 219 residues: MRLGWLRVLGCRPGSVVSRATIVEGASTTAAGTRGCLEGILEWTFGGVRGFRSAAVAMAPIKVGDAIPSVEVFEKEPGNKVNLAELFKGKKGVLFGLPGAFTPGCSKTHLPGFVEQADALKAKGIQVVACLTVNDVFVTEEWARAHKAEGKVRLLADPSGTFGKETDLLLDDSLLFLFGNHRLKRFSMVIEDGIVKSLNVEPDGTGLTCSLAPNILSQL.

A mitochondrion-targeting transit peptide spans 1-57 (MRLGWLRVLGCRPGSVVSRATIVEGASTTAAGTRGCLEGILEWTFGGVRGFRSAAVA). The Thioredoxin domain maps to 61 to 219 (IKVGDAIPSV…SLAPNILSQL (159 aa)). Lysine 80 carries the N6-acetyllysine modification. Lysine 88 bears the N6-acetyllysine; alternate mark. The residue at position 88 (lysine 88) is an N6-succinyllysine; alternate. Residue cysteine 105 is the Cysteine sulfenic acid (-SOH) intermediate of the active site. Cysteine 105 is lipidated: S-palmitoyl cysteine. Cysteine 105 and cysteine 209 are joined by a disulfide. At lysine 121 the chain carries N6-succinyllysine. A Phosphoserine modification is found at serine 187. The Microbody targeting signal signature appears at 217–219 (SQL).

It belongs to the peroxiredoxin family. Prx5 subfamily. As to quaternary structure, monomer. S-palmitoylated. Palmitoylation occurs on the active site, inhibiting its reactivity; therefore PRDX5 palmitoylation status determines its antioxidant capacity. Post-translationally, S-palmitoylated. Depalmitoylated by ABHD10.

The protein localises to the mitochondrion. Its subcellular location is the cytoplasm. It is found in the peroxisome matrix. The catalysed reaction is a hydroperoxide + [thioredoxin]-dithiol = an alcohol + [thioredoxin]-disulfide + H2O. Functionally, thiol-specific peroxidase that catalyzes the reduction of hydrogen peroxide and organic hydroperoxides to water and alcohols, respectively. Plays a role in cell protection against oxidative stress by detoxifying peroxides and as sensor of hydrogen peroxide-mediated signaling events. The polypeptide is Peroxiredoxin-5, mitochondrial (PRDX5) (Bos taurus (Bovine)).